Consider the following 465-residue polypeptide: Transcriptional protein swt1 (465 aa).

The PINc domain occupies 70 to 190; the sequence is GLFVLDTNFL…LLSDDKNLSI (121 aa).

It belongs to the SWT1 family.

The protein localises to the cytoplasm. It localises to the nucleus. In terms of biological role, involved in transcription. In Schizosaccharomyces pombe (strain 972 / ATCC 24843) (Fission yeast), this protein is Transcriptional protein swt1.